The following is a 34-amino-acid chain: Photosystem II reaction center protein M (34 aa).

Residues 7-27 (GFVASLLFVLVPTVFLIILFI) form a helical membrane-spanning segment.

This sequence belongs to the PsbM family. In terms of assembly, PSII is composed of 1 copy each of membrane proteins PsbA, PsbB, PsbC, PsbD, PsbE, PsbF, PsbH, PsbI, PsbJ, PsbK, PsbL, PsbM, PsbT, PsbX, PsbY, PsbZ, Psb30/Ycf12, peripheral proteins PsbO, CyanoQ (PsbQ), PsbU, PsbV and a large number of cofactors. It forms dimeric complexes.

Its subcellular location is the cellular thylakoid membrane. In terms of biological role, one of the components of the core complex of photosystem II (PSII). PSII is a light-driven water:plastoquinone oxidoreductase that uses light energy to abstract electrons from H(2)O, generating O(2) and a proton gradient subsequently used for ATP formation. It consists of a core antenna complex that captures photons, and an electron transfer chain that converts photonic excitation into a charge separation. This subunit is found at the monomer-monomer interface. The protein is Photosystem II reaction center protein M of Synechococcus sp. (strain WH7803).